The chain runs to 218 residues: Uracil-DNA glycosylase (218 aa).

Asp68 acts as the Proton acceptor in catalysis.

It belongs to the uracil-DNA glycosylase (UDG) superfamily. UNG family. In terms of assembly, homodimer. Interacts with protein OPG148. Component of the Uracil-DNA glycosylase(UDG)-OPG148-polymerase complex; OPG148 and UDG form a heterodimeric processivity factor that associates with OPG71 to form the processive polymerase holoenzyme.

It catalyses the reaction Hydrolyzes single-stranded DNA or mismatched double-stranded DNA and polynucleotides, releasing free uracil.. Its function is as follows. Plays an essential role in viral replication as a component of the DNA polymerase processivity factor. Excises uracil residues from the DNA which can arise as a result of misincorporation of dUMP residues by DNA polymerase or due to deamination of cytosine. The chain is Uracil-DNA glycosylase (OPG116) from Homo sapiens (Human).